A 482-amino-acid chain; its full sequence is tRNA sulfurtransferase (482 aa).

The 105-residue stretch at 61 to 165 (PAIRDALTRI…NDRLLLVKGR (105 aa)) folds into the THUMP domain. ATP contacts are provided by residues 183–184 (LI), lysine 265, glycine 287, and glutamine 296. A disulfide bridge connects residues cysteine 344 and cysteine 456. One can recognise a Rhodanese domain in the interval 404–482 (FGANDAILDI…GFSNVKVYRP (79 aa)). The active-site Cysteine persulfide intermediate is the cysteine 456.

Belongs to the ThiI family.

It localises to the cytoplasm. It catalyses the reaction [ThiI sulfur-carrier protein]-S-sulfanyl-L-cysteine + a uridine in tRNA + 2 reduced [2Fe-2S]-[ferredoxin] + ATP + H(+) = [ThiI sulfur-carrier protein]-L-cysteine + a 4-thiouridine in tRNA + 2 oxidized [2Fe-2S]-[ferredoxin] + AMP + diphosphate. The catalysed reaction is [ThiS sulfur-carrier protein]-C-terminal Gly-Gly-AMP + S-sulfanyl-L-cysteinyl-[cysteine desulfurase] + AH2 = [ThiS sulfur-carrier protein]-C-terminal-Gly-aminoethanethioate + L-cysteinyl-[cysteine desulfurase] + A + AMP + 2 H(+). It participates in cofactor biosynthesis; thiamine diphosphate biosynthesis. Functionally, catalyzes the ATP-dependent transfer of a sulfur to tRNA to produce 4-thiouridine in position 8 of tRNAs, which functions as a near-UV photosensor. Also catalyzes the transfer of sulfur to the sulfur carrier protein ThiS, forming ThiS-thiocarboxylate. This is a step in the synthesis of thiazole, in the thiamine biosynthesis pathway. The sulfur is donated as persulfide by IscS. The polypeptide is tRNA sulfurtransferase (Klebsiella pneumoniae (strain 342)).